Consider the following 408-residue polypeptide: Multidrug resistance protein MdtG (408 aa).

The next 10 helical transmembrane spans lie at 13 to 33 (LYIAWLGCFFTGAAFSLVMPF), 51 to 71 (LWSGVVFSITFLFSAIASPFW), 89 to 109 (LGMAIVMALMGLVQNIWQFLL), 112 to 132 (AALGVLGGFVPNANALIAIQV), 138 to 158 (GWALGTLSTGAVGGALLGPLL), 170 to 190 (PVFFITAVVLFICFLVTFFFI), 221 to 241 (LFVTTLIIQVATGSVAPILTL), 253 to 273 (LAFISGAIAAIPGVSALLSAP), 287 to 307 (ILVAMLILSVLLLIPMAFVQS), and 375 to 395 (AVFLVTASVVMINAFYSWLSL).

Belongs to the major facilitator superfamily. DHA1 family. MdtG (TC 2.A.1.2.20) subfamily.

It is found in the cell inner membrane. In Dickeya zeae (strain Ech586) (Dickeya dadantii (strain Ech586)), this protein is Multidrug resistance protein MdtG.